The chain runs to 398 residues: Interleukin-1 receptor type 2 (398 aa).

An N-terminal signal peptide occupies residues 1–13 (MLRLYVLVMGVSA). Over 14 to 343 (FTLQPAAHTG…FQTLRTTVKE (330 aa)) the chain is Extracellular. Ig-like C2-type domains lie at 18 to 124 (PAAH…IELR), 134 to 223 (PFIS…ITRS), and 237 to 349 (PVII…STFS). Cystine bridges form between cysteine 28–cysteine 116, cysteine 50–cysteine 108, and cysteine 152–cysteine 207. 3 N-linked (GlcNAc...) asparagine glycosylation sites follow: asparagine 66, asparagine 72, and asparagine 112. N-linked (GlcNAc...) asparagine glycosylation is found at asparagine 219 and asparagine 277. Cysteine 258 and cysteine 326 are oxidised to a cystine. Positions 329–343 (HNTLSFQTLRTTVKE) are contains proteolytic cleavage site. A helical transmembrane segment spans residues 344 to 369 (ASSTFSWGIVLAPLSLAFLVLGGIWM). The Cytoplasmic segment spans residues 370 to 398 (HRRCKHRTGKADGLTVLWPHHQDFQSYPK).

This sequence belongs to the interleukin-1 receptor family. In terms of assembly, associates with IL1RAP to form a non-signaling interleukin-1 receptor complex. A soluble form (sIL1R2) can also be produced by proteolytic cleavage at the cell surface (shedding) involving a metalloproteinase; hovever, several sIL1R2 forms ranging from 45 and 60 kDa are reported.

It localises to the secreted. Its subcellular location is the cell membrane. Functionally, non-signaling receptor for IL1A, IL1B and IL1RN. Reduces IL1B activities. Serves as a decoy receptor by competitive binding to IL1B and preventing its binding to IL1R1. Also modulates cellular response through non-signaling association with IL1RAP after binding to IL1B. IL1R2 (membrane and secreted forms) preferentially binds IL1B and poorly IL1A and IL1RN. The secreted IL1R2 recruits secreted IL1RAP with high affinity; this complex formation may be the dominant mechanism for neutralization of IL1B by secreted/soluble receptors. This Homo sapiens (Human) protein is Interleukin-1 receptor type 2 (IL1R2).